The sequence spans 711 residues: Nucleolin (711 aa).

Positions 1 to 304 (MVKLAKAGKN…KKQKVEGTEP (304 aa)) are disordered. 3 positions are modified to N6-acetyllysine: Lys-9, Lys-15, and Lys-16. A compositionally biased stretch (acidic residues) spans 24–43 (VEEDSEDEEMSEDEEDDSSG). Ser-28, Ser-34, Ser-41, and Ser-42 each carry phosphoserine. Residues 56 to 107 (AAATSAKKVVVSPTKKVAVATPAKKAAVTPGKKAAATPAKKTVTPAKAVATP) are compositionally biased toward low complexity. The stretch at 58–65 (ATSAKKVV) is repeat 1. The interval 58-135 (ATSAKKVVVS…GAAIPAKGAK (78 aa)) is 8 X 8 AA tandem repeats of X-T-P-X-K-K-X-X. Position 67 is a phosphoserine (Ser-67). Phosphothreonine is present on residues Thr-69, Thr-76, Thr-84, and Thr-92. 3 tandem repeats follow at residues 75 to 82 (ATPAKKAA), 83 to 90 (VTPGKKAA), and 91 to 98 (ATPAKKTV). Lys-96 carries the N6-acetyllysine modification. Thr-99 is subject to Phosphothreonine. One copy of the 5; truncated repeat lies at 99 to 104 (TPAKAV). Position 102 is an N6-acetyllysine (Lys-102). The stretch at 105-112 (ATPGKKGA) is repeat 6. Residue Thr-106 is modified to Phosphothreonine. Residue Lys-109 is modified to N6-acetyllysine. The residue at position 113 (Thr-113) is a Phosphothreonine. Residue Lys-116 is modified to N6-acetyllysine. A run of 2 repeats spans residues 120-127 (ATPGKKGA) and 128-135 (AIPAKGAK). A Phosphothreonine modification is found at Thr-121. A compositionally biased stretch (low complexity) spans 122–137 (PGKKGAAIPAKGAKNG). Lys-124 carries the N6-acetyllysine modification. Phosphoserine is present on residues Ser-145, Ser-153, Ser-184, and Ser-207. Acidic residues-rich tracts occupy residues 145 to 171 (SDEE…DEIE) and 184 to 212 (SEDE…EEAM). Position 215 is a phosphothreonine (Thr-215). The span at 235–273 (EDEDEEEDDEDEDDDDDEDDEDEDDDDEDEEEEEEEEEP) shows a compositional bias: acidic residues. The span at 274–301 (VKEAPGKRKKEMAKQKAAPEAKKQKVEG) shows a compositional bias: basic and acidic residues. Residue Lys-298 forms a Glycyl lysine isopeptide (Lys-Gly) (interchain with G-Cter in SUMO1); alternate linkage. A Glycyl lysine isopeptide (Lys-Gly) (interchain with G-Cter in SUMO2); alternate cross-link involves residue Lys-298. Thr-302 carries the phosphothreonine modification. 2 RRM domains span residues 308–384 (FNLF…KPKG) and 394–467 (RTLL…YTGE). Residue Lys-319 is modified to N6-acetyllysine. A Glycyl lysine isopeptide (Lys-Gly) (interchain with G-Cter in SUMO1); alternate cross-link involves residue Lys-325. Residue Lys-325 forms a Glycyl lysine isopeptide (Lys-Gly) (interchain with G-Cter in SUMO2); alternate linkage. Lys-349 carries the N6-acetyllysine modification. Residue Ser-357 is modified to Phosphoserine. At Thr-368 the chain carries Phosphothreonine. Lys-371 is covalently cross-linked (Glycyl lysine isopeptide (Lys-Gly) (interchain with G-Cter in SUMO2)). Lys-378 participates in a covalent cross-link: Glycyl lysine isopeptide (Lys-Gly) (interchain with G-Cter in SUMO2); alternate. N6-acetyllysine; alternate is present on Lys-378. N6-acetyllysine is present on residues Lys-399 and Lys-404. Thr-406 bears the Phosphothreonine mark. 2 positions are modified to N6-acetyllysine: Lys-428 and Lys-445. A phosphoserine mark is found at Ser-459 and Ser-461. Residues Lys-468 and Lys-478 each carry the N6-acetyllysine modification. The RRM 3 domain maps to 487–561 (KTLVLSNLSY…RAIRLELQGP (75 aa)). Lys-514 participates in a covalent cross-link: Glycyl lysine isopeptide (Lys-Gly) (interchain with G-Cter in SUMO2); alternate. At Lys-514 the chain carries N6-acetyllysine; alternate. At Lys-522 the chain carries N6-acetyllysine. Ser-564 is subject to Phosphoserine. Lys-573 is modified (N6-acetyllysine). In terms of domain architecture, RRM 4 spans 573 to 648 (KTLFVKGLSE…NKVTLDWAKP (76 aa)). Lys-578 is covalently cross-linked (Glycyl lysine isopeptide (Lys-Gly) (interchain with G-Cter in SUMO2); alternate). Lys-578 is modified (N6-acetyllysine; alternate). Ser-581 is subject to Phosphoserine. Residue Lys-590 forms a Glycyl lysine isopeptide (Lys-Gly) (interchain with G-Cter in SUMO1); alternate linkage. Lys-590 participates in a covalent cross-link: Glycyl lysine isopeptide (Lys-Gly) (interchain with G-Cter in SUMO2); alternate. A phosphoserine mark is found at Ser-592 and Ser-620. Lys-625 is covalently cross-linked (Glycyl lysine isopeptide (Lys-Gly) (interchain with G-Cter in SUMO2)). Residues 641 to 711 (VTLDWAKPKG…KPQGKKTKFE (71 aa)) form a disordered region. An N6-acetyllysine modification is found at Lys-647. Over residues 651–697 (EGGFGGRGGGRGGFGGRGGGRGGRGGFGGRGRGGFGGRGGFRGGRGG) the composition is skewed to gly residues. Arg-657, Arg-661, Arg-667, Arg-671, Arg-674, Arg-680, Arg-682, Arg-688, and Arg-692 each carry asymmetric dimethylarginine. Arg-695 carries the post-translational modification Asymmetric dimethylarginine; alternate. An Omega-N-methylarginine; alternate modification is found at Arg-695. Residues 698–711 (GGDHKPQGKKTKFE) are compositionally biased toward basic and acidic residues.

Identified in a IGF2BP1-dependent mRNP granule complex containing untranslated mRNAs. Component of the SWAP complex that consists of NPM1, NCL/nucleolin, PARP1 and SWAP70. Component of a complex which is at least composed of HTATSF1/Tat-SF1, the P-TEFb complex components CDK9 and CCNT1, RNA polymerase II, SUPT5H, and NCL/nucleolin. Interacts with AICDA. Interacts with APTX. Interacts with C1QBP. Interacts with ERBB4. Interacts (via C-terminus) with FMR1 isoform 6 (via N-terminus). Interacts with GZF1; this interaction is important for nucleolar localization of GZF1. Interacts with NSUN2. Interacts with NVL. Interacts (via N-terminus domain) with SETX. Interacts (via RRM1 and C-terminal RRM4/Arg/Gly-rich domains) with TERT; the interaction is important for nucleolar localization of TERT. Interacts with WDR46. Interacts with ZFP36. Interacts with LRRC34. Interacts with RRP1B. Interacts with HNRNPU; this interaction occurs during mitosis. Interacts with RIOK1; RIOK1 recruits NCL to PRMT5 for symmetrically methylation. Interacts with ZBTB7B. Interacts with MDK; this interaction promotes NCL clustering and lateral movements of this complex into lipid rafts leading to MDK internalization. Interacts with HDGF. Interacts with ALKBH2. Interacts with IGFBP5; this interaction is necessary for IGFBP5 localization to the nucleus. Some glutamate residues are glycylated by TTLL8. This modification occurs exclusively on glutamate residues and results in a glycine chain on the gamma-carboxyl group. Post-translationally, symmetrically methylated by PRMT5.

It localises to the nucleus. The protein resides in the nucleolus. Its subcellular location is the cytoplasm. Its function is as follows. Nucleolin is the major nucleolar protein of growing eukaryotic cells. It is found associated with intranucleolar chromatin and pre-ribosomal particles. It induces chromatin decondensation by binding to histone H1. It is thought to play a role in pre-rRNA transcription and ribosome assembly. May play a role in the process of transcriptional elongation. Binds RNA oligonucleotides with 5'-UUAGGG-3' repeats more tightly than the telomeric single-stranded DNA 5'-TTAGGG-3' repeats. The protein is Nucleolin (NCL) of Macaca fascicularis (Crab-eating macaque).